A 229-amino-acid polypeptide reads, in one-letter code: Transcriptional activator protein YukR (229 aa).

Positions 157–222 (DTSGKGILSP…QAIRLGVELE (66 aa)) constitute an HTH luxR-type domain. The H-T-H motif DNA-binding region spans 181-200 (YPEIALIAGITTRTVKHHMG).

It belongs to the autoinducer-regulated transcriptional regulatory protein family.

Its function is as follows. Probable transcriptional activator. Binds to an autoinducer molecule. The sequence is that of Transcriptional activator protein YukR (yukR) from Yersinia ruckeri.